Reading from the N-terminus, the 272-residue chain is MEGGGGGGGGGGGGGGGGGGGGAPYATRTAEEVFRDLRGRRAGMIKALTTDVEKFYKLCDPEKENLCLYGYPNETWEVTLPAEEVPPEIPEPALGINFARDGMNEKDWLALVAVHSDSWLLSVAFYFGARFGFDREARRRLFNMINNLPTIFEVVTGAAKKQAKEKTPNSSSKSNKPSSKVQSKAESRSKSKLSAPKDEEGSGDDEGEEEEDDHDNTLCGTCGTNDGKDEFWICCDNCEKWYHGKCVKITPARAEHIKQYKCPDCTNKRARA.

The segment covering 1–23 has biased composition (gly residues); it reads MEGGGGGGGGGGGGGGGGGGGGA. Disordered regions lie at residues 1–24 and 162–218; these read MEGG…GGAP and QAKE…DNTL. Residues 168–182 show a composition bias toward low complexity; sequence PNSSSKSNKPSSKVQ. Over residues 183 to 200 the composition is skewed to basic and acidic residues; it reads SKAESRSKSKLSAPKDEE. Residues 201 to 214 show a composition bias toward acidic residues; it reads GSGDDEGEEEEDDH. The PHD-type zinc finger occupies 216–268; sequence NTLCGTCGTNDGKDEFWICCDNCEKWYHGKCVKITPARAEHIKQYKCPDCTNK.

This sequence belongs to the Alfin family.

The protein localises to the nucleus. Histone-binding component that specifically recognizes H3 tails trimethylated on 'Lys-4' (H3K4me3), which mark transcription start sites of virtually all active genes. This chain is PHD finger protein ALFIN-LIKE 6, found in Oryza sativa subsp. japonica (Rice).